The primary structure comprises 417 residues: Acetate kinase (417 aa).

Asn-7 is a Mg(2+) binding site. Residue Lys-14 participates in ATP binding. Residue Arg-104 coordinates substrate. Asp-162 functions as the Proton donor/acceptor in the catalytic mechanism. ATP is bound by residues 222-226 (HLGNG), 297-299 (DMR), and 346-350 (GIGEN). Glu-401 provides a ligand contact to Mg(2+).

This sequence belongs to the acetokinase family. In terms of assembly, homodimer. Mg(2+) is required as a cofactor. Mn(2+) serves as cofactor.

Its subcellular location is the cytoplasm. The catalysed reaction is acetate + ATP = acetyl phosphate + ADP. It participates in metabolic intermediate biosynthesis; acetyl-CoA biosynthesis; acetyl-CoA from acetate: step 1/2. Catalyzes the formation of acetyl phosphate from acetate and ATP. Can also catalyze the reverse reaction. In Chloroherpeton thalassium (strain ATCC 35110 / GB-78), this protein is Acetate kinase.